The following is a 569-amino-acid chain: Thiol:disulfide interchange protein DsbD (569 aa).

The N-terminal stretch at 1-19 (MAQRILTLILLLCSTSAFA) is a signal peptide. 2 disulfides stabilise this stretch: C122–C128 and C187–C309. 7 helical membrane passes run 168–188 (LPFS…TPCV), 213–233 (LLTF…GLVV), 248–268 (YVLI…FGLF), 301–321 (IAGL…LLYI), 328–348 (WLGG…LILI), 362–382 (WMEH…VFLL), and 391–411 (GLRL…ITSL). The 140-residue stretch at 430–569 (LVSVRPLQDW…FSAHLRDRQP (140 aa)) folds into the Thioredoxin domain. A disulfide bridge links C484 with C487.

This sequence belongs to the thioredoxin family. DsbD subfamily.

It is found in the cell inner membrane. The enzyme catalyses [protein]-dithiol + NAD(+) = [protein]-disulfide + NADH + H(+). It catalyses the reaction [protein]-dithiol + NADP(+) = [protein]-disulfide + NADPH + H(+). Its function is as follows. Required to facilitate the formation of correct disulfide bonds in some periplasmic proteins and for the assembly of the periplasmic c-type cytochromes. Acts by transferring electrons from cytoplasmic thioredoxin to the periplasm. This transfer involves a cascade of disulfide bond formation and reduction steps. In Citrobacter koseri (strain ATCC BAA-895 / CDC 4225-83 / SGSC4696), this protein is Thiol:disulfide interchange protein DsbD.